A 181-amino-acid chain; its full sequence is ADP-ribosylation factor 1 (181 aa).

Gly2 bears the N-acetylglycine; alternate mark. A lipid anchor (N-myristoyl glycine; alternate) is attached at Gly2. Residues 3–16 (NIFANLFKGLFGKK) are important for the stable binding to the membranes. GTP is bound by residues 24-32 (GLDAAGKTT), 126-129 (NKQD), and Ala160.

This sequence belongs to the small GTPase superfamily. Arf family. As to quaternary structure, interacts (when activated) with GGA1, GGA2 and GGA3; the interaction is required for proper subcellular location of GGA1, GGA2 and GGA3. Interacts with ARHGAP21, ASAP2, GGA1, HERC1, PRKCABP, PIP5K1B, TMED2, PSCD2, TMED10 and GRIA2. Interacts with ARFGAP1, which hydrolyzes GTP and thus, regulates its function. Interacts with PI4KB in the Golgi complex. Interacts with NCS1/FREQ in the Golgi and at the plasma membrane. Interacts with PLEKHA3. Interacts with PLEKHA8; the interaction, together with phosphatidylinositol 4-phosphate binding, is required for FAPP2-mediated glucosylceramide transfer activity. Interacts (activated) with PICK1 (via PDZ domain); the interaction blocks Arp2/3 complex inhibition. Interacts with IQSEC1. Interacts with C9orf72.

The protein localises to the golgi apparatus membrane. It is found in the synapse. The protein resides in the synaptosome. Its subcellular location is the postsynaptic density. The enzyme catalyses GTP + H2O = GDP + phosphate + H(+). Its activity is regulated as follows. Alternates between an inactive GDP-bound form and an active GTP-bound form. Activated by guanine nucleotide-exchange factors (GEFs) and inactivated by GTPase-activating proteins (GAPs). In terms of biological role, small GTPase involved in protein trafficking between different compartments. Modulates vesicle budding and uncoating within the Golgi complex. In its GTP-bound form, triggers the recruitment of coatomer proteins to the Golgi membrane. The hydrolysis of ARF1-bound GTP, which is mediated by ARFGAPs proteins, is required for dissociation of coat proteins from Golgi membranes and vesicles. The GTP-bound form interacts with PICK1 to limit PICK1-mediated inhibition of Arp2/3 complex activity; the function is linked to AMPA receptor (AMPAR) trafficking, regulation of synaptic plasticity of excitatory synapses and spine shrinkage during long-term depression (LTD). Plays a key role in the regulation of intestinal stem cells and gut microbiota, and is essential for maintaining intestinal homeostasis. Also plays a critical role in mast cell expansion but not in mast cell maturation by facilitating optimal mTORC1 activation. The chain is ADP-ribosylation factor 1 (ARF1) from Bos taurus (Bovine).